The following is a 1087-amino-acid chain: Apoptosis-stimulating of p53 protein 1 (1087 aa).

A disordered region spans residues 82 to 122; sequence HEDSPTESSEQGARQTQEQRTQRSVVNVPGEKRTENGVGNP. Residues 87-106 show a composition bias toward polar residues; sequence TESSEQGARQTQEQRTQRSV. S332 and S335 each carry phosphoserine. Disordered stretches follow at residues 374 to 415, 442 to 721, and 734 to 878; these read SSAA…GMEG, IGKG…PNIQ, and GMEG…TGHG. Positions 393-405 are enriched in polar residues; the sequence is KQNSASVKSTQMT. Positions 445–458 are enriched in pro residues; sequence GPPPIPGVGKPLPP. Residues 459–476 show a composition bias toward low complexity; it reads SYGTYPSSGPLGPGSTSS. The segment covering 506 to 520 has biased composition (polar residues); it reads NAPQPGSSQQIQQRI. The span at 523–536 shows a compositional bias: pro residues; that stretch reads PPSPTYPPAGPPAF. At R552 the chain carries Asymmetric dimethylarginine. A compositionally biased stretch (polar residues) spans 570–589; that stretch reads QTVNSSSIYSMYLQQATPPK. Low complexity predominate over residues 610–625; sequence PVLPSGSASPSPLPFL. S679 and S708 each carry phosphoserine. Residues 805 to 831 are compositionally biased toward polar residues; that stretch reads PQTTHQTAEPTEDNNNNVAPVPSTEQI. ANK repeat units follow at residues 917–949 and 950–982; these read EGIT…AADS and DGWT…ASTI. Positions 1016–1078 constitute an SH3 domain; it reads MNKGTVYALW…PKNLLGLYPR (63 aa).

Belongs to the ASPP family. Interacts with P53/TP53; the interaction promotes pro-apoptotic activity.

It localises to the cytoplasm. It is found in the nucleus. In terms of biological role, regulator that plays a central role in regulation of apoptosis via its interaction with p53/TP53. Regulates TP53 by enhancing the DNA binding and transactivation function of TP53 on the promoters of proapoptotic genes in vivo. The chain is Apoptosis-stimulating of p53 protein 1 (Ppp1r13b) from Mus musculus (Mouse).